The following is a 476-amino-acid chain: Major facilitator superfamily domain-containing protein 12 (476 aa).

Met1 is modified (N-acetylmethionine). At 1–25 (MSPPSDDAGPGPPRTLSLAARLSFA) the chain is on the cytoplasmic side. A helical membrane pass occupies residues 26-46 (VGHFLNDLCAGMWFTYLLLFL). Residues 47-55 (HSVRGYSSR) are Lumenal-facing. A helical transmembrane segment spans residues 56-76 (GAGLLLLLGQVADGLCTPLVG). The Cytoplasmic segment spans residues 77–94 (YEADRASCVRCGPRKAWH). The chain crosses the membrane as a helical span at residues 95–115 (LAGTVCVLLSFPFIFSPCLGC). At 116-121 (GEATPE) the chain is on the lumenal side. Residues 122-142 (WAALLYYGPFIVVFQFGWAAT) form a helical membrane-spanning segment. The Cytoplasmic portion of the chain corresponds to 143–167 (QIAHLSLIPELVTSDHEKVELTALR). Residues 168–188 (YAFTVVANITVYGAAWLLLHL) form a helical membrane-spanning segment. Over 189-213 (QGSAHGEQDISVGDQLGVQDVPVFR) the chain is Lumenal. Residues 214 to 234 (NLALLVVGVGAIFSLLFHLGT) form a helical membrane-spanning segment. At 235–284 (KEGHRSQHWGNEPNEHTPLVAPAAQPLLLWKHWLREPAFYQVGMLYMTTR) the chain is on the cytoplasmic side. The residue at position 251 (Thr251) is a Phosphothreonine. Residues 285 to 305 (LIVNLSQTYIAMYLTYSLSLP) traverse the membrane as a helical segment. A topological domain (lumenal) is located at residue Lys306. A helical membrane pass occupies residues 307 to 327 (KFIATIPLVMYLSGFFSSFLM). Over 328-343 (KPVNRRIGRNMTYFTG) the chain is Cytoplasmic. Helical transmembrane passes span 344-364 (LLVILAFAAWVALADNLGVAV) and 365-385 (YGAAVLLGAGCATILVTSLAM). Residues 386 to 398 (TADLIGPHTHSGA) lie on the Cytoplasmic side of the membrane. Residues 399-419 (FVYGAMSFSDKVANGLAVMAV) form a helical membrane-spanning segment. The Lumenal segment spans residues 420–444 (QSLHPCPSELCCGACISFYHWVMTA). Residues 445 to 465 (VTGGVGVAAALALCSLLIWPI) form a helical membrane-spanning segment. Over 466-476 (RIRNRDPRDRP) the chain is Cytoplasmic.

The protein belongs to the major facilitator superfamily. In terms of processing, phosphorylation at Thr-251 by MTOR via mTORC1 pathway promotes cysteine transport in lysosomes, thereby regulating lysosomal cysteine and cystine storage and redox homeostasis.

The protein resides in the melanosome membrane. It is found in the lysosome membrane. It catalyses the reaction L-cysteine(in) = L-cysteine(out). Transporter that mediates the import of cysteine into melanosomes, thereby regulating skin/hair pigmentation. In melanosomes, cysteine import is required both for normal levels of cystine, the oxidized dimer of cysteine, and provide cysteine for the production of the cysteinyldopas used in pheomelanin synthesis, thereby regulating skin/hair pigmentation. Also catalyzes import of cysteine into lysosomes in non-pigmented cells, regulating lysosomal cystine and cysteine storage, which is essnetial for redox homeostasis. This chain is Major facilitator superfamily domain-containing protein 12, found in Mus musculus (Mouse).